Consider the following 288-residue polypeptide: Phenazine biosynthesis-like domain-containing protein (288 aa).

Residue Glu46 is part of the active site.

Belongs to the PhzF family. In terms of assembly, interacts with UNRIP/MAWD.

This Pongo abelii (Sumatran orangutan) protein is Phenazine biosynthesis-like domain-containing protein (PBLD).